Consider the following 328-residue polypeptide: tRNA uridine(34) hydroxylase (328 aa).

A Rhodanese domain is found at 130–224 (LDKDTVVLDT…YGKDPEVQGE (95 aa)). The Cysteine persulfide intermediate role is filled by cysteine 184.

Belongs to the TrhO family.

It carries out the reaction uridine(34) in tRNA + AH2 + O2 = 5-hydroxyuridine(34) in tRNA + A + H2O. Functionally, catalyzes oxygen-dependent 5-hydroxyuridine (ho5U) modification at position 34 in tRNAs. The polypeptide is tRNA uridine(34) hydroxylase (Streptococcus pneumoniae serotype 19F (strain G54)).